Consider the following 193-residue polypeptide: Coiled-coil domain-containing protein 184 (193 aa).

Positions 39–68 form a coiled coil; it reads GMKELMEHLKAQLQALFEDVRAMRGALDEQ. Residues 101 to 176 are disordered; the sequence is GLGVAGGKGS…LGENGPLVEP (76 aa). A compositionally biased stretch (acidic residues) spans 135–146; the sequence is PDEEDEEEEEEK.

This is Coiled-coil domain-containing protein 184 (Ccdc184) from Rattus norvegicus (Rat).